Here is a 378-residue protein sequence, read N- to C-terminus: MGSSEKNGTAYGEYTYAELEREQYWPSEKLRISITGAGGFIGSHIARRLKSEGHYIIASDWKKNEHMTEDMFCHEFHLVDLRVMDNCLKVTNSVDHVFNLAADMGGMGFIQSNHSVIMYNNTMISFNMLEAARINGVKRFFYASSACIYPEFKQLETNVSLKESDAWPAEPQDAYGLEKLATEELCKHYTKDFGIECRVGRFHNIYGPFGTWKGGREKAPAAFCRKAQTSTDRFEMWGDGLQTRSFTFIDECVEGVLRLTKSDFREPVNIGSDEMVSMNEMAEIILSFEDRELPIHHIPGPEGVRGRNSDNTLIKEKLGWAPTMKLKDGLRFTYFWIKEQIEKEKTQGVDIAGYGSSKVVSTQAPVQLGSLRAADGKE.

Residues 36-62 (GAGG…SDWK), Asp-60, and Asp-80 contribute to the NAD(+) site. Residues Gly-105 and 145–147 (SAC) each bind substrate. Residues Tyr-175 and Lys-179 each contribute to the NAD(+) site. Catalysis depends on Tyr-175, which acts as the Proton acceptor. Substrate contacts are provided by residues Asn-204, 217-219 (EKA), Lys-226, 242-244 (QTR), Arg-307, and Ser-357.

The protein belongs to the NAD(P)-dependent epimerase/dehydratase family. In terms of assembly, homodimer. The cofactor is NAD(+).

The catalysed reaction is GDP-alpha-D-mannose = GDP-beta-L-gulose. It carries out the reaction GDP-beta-L-gulose = GDP-beta-L-galactose. It functions in the pathway cofactor biosynthesis; L-ascorbate biosynthesis via GDP-alpha-D-mannose pathway; L-ascorbate from GDP-alpha-D-mannose: step 1/5. In terms of biological role, catalyzes a reversible epimerization of GDP-D-mannose that precedes the committed step in the biosynthesis of vitamin C (L-ascorbate), resulting in the hydrolysis of the highly energetic glycosyl-pyrophosphoryl linkage. Able to catalyze 2 distinct epimerization reactions and can release both GDP-L-galactose and GDP-L-gulose from GDP-mannose. The sequence is that of GDP-mannose 3,5-epimerase 1 from Oryza sativa subsp. indica (Rice).